The primary structure comprises 461 residues: MLQACRVLRSRAGPSPGSWQPLSFDGGAFHLKSIGELTRALLVLRLCAWPPLVTHGLALQAWSQRLLGSRLSGALLRASIYGQFVAGETAEEVRSCVLQLQNLGLRPLLAVPTEEEPDSAVKTGEAWYEGNLSAMLRCVDLSRGLLETPDPTGNALMQLKMTALMSTRLCKQLTSWVRRPGDSLELSPERLAEAMDSGQDLQVSCLNTEQTRHLQASLSRLHRVVQHARAQRVRLLVDAEYTSLNPALSLLVAALATRWNSSGEGGPWVWNTYQAYLKDTYERLRWDAEAADRAGLAFGVKLVRGAYLDKERETARLQGTEDPTQPDYEATSQSYSRCLELMLTQVSHRGPMCHLMVASHNEDSVRQATKRMWELGIPPDGPVCFGQLLGMCDHVSLALGQAGYAVYKSIPYGSLEEVIPYLIRRAQENRSVLRGARREQELLSQELRRRLLGRGLRVSPH.

An N6-acetyllysine modification is found at lysine 310.

This sequence belongs to the proline oxidase family. FAD serves as cofactor.

It catalyses the reaction trans-4-hydroxy-L-proline + a quinone = (3R,5S)-1-pyrroline-3-hydroxy-5-carboxylate + a quinol + H(+). The enzyme catalyses L-proline + a quinone = (S)-1-pyrroline-5-carboxylate + a quinol + H(+). The protein operates within amino-acid degradation; L-proline degradation into L-glutamate; L-glutamate from L-proline: step 1/2. Dehydrogenase that converts trans-4-L-hydroxyproline to delta-1-pyrroline-3-hydroxy-5-carboxylate (Hyp) using ubiquinone-10 as the terminal electron acceptor. Can also use proline as a substrate but with a very much lower efficiency. Does not react with other diastereomers of Hyp: trans-4-D-hydroxyproline and cis-4-L-hydroxyproline. Ubiquininone analogs such as menadione, duroquinone and ubiquinone-1 react more efficiently than oxygen as the terminal electron acceptor during catalysis. In Bos taurus (Bovine), this protein is Hydroxyproline dehydrogenase.